The primary structure comprises 495 residues: Syntaphilin (495 aa).

The segment at 1–74 is disordered; it reads MAMSLQGSRR…HGIKPPTPEQ (74 aa). The segment covering 7-49 has biased composition (low complexity); the sequence is GSRRASAGSRRRTSPPVSVRDAYGTSSLSSSSNSGSCKGSDSS. Residues 79-161 are a coiled coil; the sequence is LQQKEVCIRH…VKNNLIDKDK (83 aa). The tract at residues 191 to 244 is disordered; the sequence is VAKEEGTGESAGGSPARSLTRSSTYTKLSDPAVCGDRQPGDPSNTSAEDGADSG. Serine 200 and serine 204 each carry phosphoserine. A compositionally biased stretch (polar residues) spans 207–217; the sequence is RSLTRSSTYTK. Threonine 214 is subject to Phosphothreonine. Serine 219 bears the Phosphoserine mark. Phosphothreonine is present on threonine 235. Residues 427–446 traverse the membrane as a helical segment; that stretch reads YIVDLLAVVVPAVPTVAWLC.

In terms of assembly, binds to STX1A. Interacts with DNM1; this interaction inhibits the binding of DNM1 to AMPH and DNM1-receptor-mediated endocytosis.

It is found in the membrane. Its subcellular location is the synapse. The protein resides in the synaptosome. In terms of biological role, inhibits SNARE complex formation by absorbing free STX1A. The protein is Syntaphilin of Mus musculus (Mouse).